The primary structure comprises 356 residues: DNA polymerase IV (356 aa).

The UmuC domain maps to 7 to 188 (IIHIDMDAFY…IPVTKFYGVG (182 aa)). Residues D11 and D106 each contribute to the Mg(2+) site. Residue E107 is part of the active site.

It belongs to the DNA polymerase type-Y family. Monomer. Mg(2+) is required as a cofactor.

Its subcellular location is the cytoplasm. The catalysed reaction is DNA(n) + a 2'-deoxyribonucleoside 5'-triphosphate = DNA(n+1) + diphosphate. Functionally, poorly processive, error-prone DNA polymerase involved in untargeted mutagenesis. Copies undamaged DNA at stalled replication forks, which arise in vivo from mismatched or misaligned primer ends. These misaligned primers can be extended by PolIV. Exhibits no 3'-5' exonuclease (proofreading) activity. May be involved in translesional synthesis, in conjunction with the beta clamp from PolIII. In Listeria monocytogenes serotype 4a (strain HCC23), this protein is DNA polymerase IV.